Here is a 310-residue protein sequence, read N- to C-terminus: Alpha/beta hydrolase domain-containing protein 17A (310 aa).

Active-site charge relay system residues include serine 190, aspartate 255, and histidine 284. Residue serine 307 is modified to Phosphoserine.

The protein belongs to the AB hydrolase superfamily. ABHD17 family. Post-translationally, palmitoylated on cysteine residues located in a cysteine cluster at the N-terminus which promotes membrane localization. Palmitoylation is required for post-synaptic localization and for depalmitoylating activity towards DLG4/PSD95.

The protein resides in the cell membrane. It is found in the endosome membrane. It localises to the cell projection. Its subcellular location is the dendritic spine. The protein localises to the postsynaptic density membrane. The enzyme catalyses S-hexadecanoyl-L-cysteinyl-[protein] + H2O = L-cysteinyl-[protein] + hexadecanoate + H(+). In terms of biological role, hydrolyzes fatty acids from S-acylated cysteine residues in proteins. Has depalmitoylating activity towards NRAS. Has depalmitoylating activity towards DLG4/PSD95. May have depalmitoylating activity towards MAP6. The sequence is that of Alpha/beta hydrolase domain-containing protein 17A from Bos taurus (Bovine).